The chain runs to 85 residues: Small ribosomal subunit protein bS16 (85 aa).

Belongs to the bacterial ribosomal protein bS16 family.

In Pseudomonas syringae pv. tomato (strain ATCC BAA-871 / DC3000), this protein is Small ribosomal subunit protein bS16.